Reading from the N-terminus, the 633-residue chain is Chaperone protein HtpG (633 aa).

The segment at 1 to 344 is a; substrate-binding; it reads MSLQPQAETL…SNDLPLNISR (344 aa). The interval 345 to 560 is b; that stretch reads ELLQSNEVIN…ENEMSGHLQR (216 aa). The segment at 561 to 633 is c; it reads LLIQTGQDFM…KGLNELLLDS (73 aa).

This sequence belongs to the heat shock protein 90 family. Homodimer.

The protein resides in the cytoplasm. Functionally, molecular chaperone. Has ATPase activity. The protein is Chaperone protein HtpG of Coxiella burnetii (strain RSA 331 / Henzerling II).